Here is a 107-residue protein sequence, read N- to C-terminus: Multidrug resistance protein mmr (107 aa).

The next 4 membrane-spanning stretches (helical) occupy residues 2-19 (TYLF…ATSL), 29-51 (LWPT…VSIS), 58-80 (VAYA…LFLG), and 84-106 (SVTK…LTGA).

Belongs to the drug/metabolite transporter (DMT) superfamily. Small multidrug resistance (SMR) (TC 2.A.7.1) family. Mmr subfamily.

The protein localises to the cell membrane. Multidrug efflux pump. Confers resistance to tetraphenylphosphonium (TPP), erythromycin, ethidium bromide, acriflavine, safranin O and pyronin Y. In Mycolicibacterium paratuberculosis (strain ATCC BAA-968 / K-10) (Mycobacterium paratuberculosis), this protein is Multidrug resistance protein mmr (mmr).